Here is a 250-residue protein sequence, read N- to C-terminus: MSRLLLNCDIGESFGSWTMGLDAEVMPFIDCANIACGFHAGDPSIMRKTVSLALSHGVKIGAHPAYQDLVGFGRRSMAYTAQELQDILHYQIGALDGICRAQGGKVSYVKPHGAMYNDMMANPAQLRAVIQAVVAYDRSLPLMLMATRDNTAAQQLGDEYGVTLWFEAFADRAYDSAGRLVSRQLPGAVHHDCETIIGQALTIARGDNLTASDGSALHLQANTLCVHGDNASSVAAVQRIRQALNEQSAP.

It belongs to the LamB/PxpA family. As to quaternary structure, forms a complex composed of PxpA, PxpB and PxpC.

The catalysed reaction is 5-oxo-L-proline + ATP + 2 H2O = L-glutamate + ADP + phosphate + H(+). In terms of biological role, catalyzes the cleavage of 5-oxoproline to form L-glutamate coupled to the hydrolysis of ATP to ADP and inorganic phosphate. This Pseudomonas fluorescens (strain Pf0-1) protein is 5-oxoprolinase subunit A.